A 236-amino-acid polypeptide reads, in one-letter code: Acetate--CoA ligase [ADP-forming] II subunit beta (236 aa).

In terms of domain architecture, ATP-grasp spans K26–K62. A52–L63 lines the ATP pocket.

Belongs to the acetate CoA ligase beta subunit family. Heterotetramer of two alpha and two beta subunits.

It carries out the reaction acetate + ATP + CoA = acetyl-CoA + ADP + phosphate. Functionally, catalyzes the reversible formation of acetate and ATP from acetyl-CoA by using ADP and phosphate. Can use other substrates such as phenylacetyl-CoA, indoleacetyl-CoA and isobutyryl-CoA, but not succinyl-CoA. Seems to be involved primarily in the degradation of aryl-CoA esters to the corresponding acids. Participates in the conversion of acetyl-CoA to acetate and in the degradation of branched-chain amino acids via branched-chain-acyl-CoA esters. This chain is Acetate--CoA ligase [ADP-forming] II subunit beta, found in Pyrococcus furiosus (strain ATCC 43587 / DSM 3638 / JCM 8422 / Vc1).